The sequence spans 544 residues: MCTHTGHSAAPSLSGLIDAEPCHFWLPLMPNEPTDVLPPTSFNVPFGTRPGIAALGERFFTRLSPTPLPSPYLVSVAPAAAALLGWNETDLQDAVKDPAFIDSFVGNAVPDWADPLATVYSGHQFGVWAGQLGDGRAIRLAEAQTPGGPWEIQLKGGGLTPYSRMADGRAVLRSSIREYLCSEAMYALGVPTTRALSIIGSDAPVRRETIETSAVVTRLAPSFIRFGHFEHFAAREDHASLRQLADFVIDNFYPACRNAANPYQALLRDVSLLTADMVAHWQAVGFCHGVMNTDNMSILGLTIDYGPFGFLDAFDANHICNHSDQQGRYAYSQQPQVAFWNLHCLAQALLPLWRDANAADPEAEKAAAVEAAREALDPFRDRYAEAFFRHYRAKLGLRSEQEQDETLMTNLFRVLHENRVDYTSFWRNLSRVSSLDNSHDAAVRDLFLDRAAWDAWAAEYRARLQSEQSDDAARTTAMLATNPKYVLRNHMAETAIRAARDKDFSEVDRLMAVLSKPFDEQPEAESYAKLPPDWASGLEVSCSS.

8 residues coordinate ATP: glycine 133, glycine 135, arginine 136, lysine 155, aspartate 167, glycine 168, arginine 218, and arginine 225. Residue aspartate 294 is the Proton acceptor of the active site. Residues asparagine 295 and aspartate 304 each contribute to the Mg(2+) site. An ATP-binding site is contributed by aspartate 304.

Belongs to the SELO family. Mg(2+) serves as cofactor. It depends on Mn(2+) as a cofactor.

The enzyme catalyses L-seryl-[protein] + ATP = 3-O-(5'-adenylyl)-L-seryl-[protein] + diphosphate. It carries out the reaction L-threonyl-[protein] + ATP = 3-O-(5'-adenylyl)-L-threonyl-[protein] + diphosphate. It catalyses the reaction L-tyrosyl-[protein] + ATP = O-(5'-adenylyl)-L-tyrosyl-[protein] + diphosphate. The catalysed reaction is L-histidyl-[protein] + UTP = N(tele)-(5'-uridylyl)-L-histidyl-[protein] + diphosphate. The enzyme catalyses L-seryl-[protein] + UTP = O-(5'-uridylyl)-L-seryl-[protein] + diphosphate. It carries out the reaction L-tyrosyl-[protein] + UTP = O-(5'-uridylyl)-L-tyrosyl-[protein] + diphosphate. Nucleotidyltransferase involved in the post-translational modification of proteins. It can catalyze the addition of adenosine monophosphate (AMP) or uridine monophosphate (UMP) to a protein, resulting in modifications known as AMPylation and UMPylation. The sequence is that of Protein nucleotidyltransferase YdiU from Cupriavidus metallidurans (strain ATCC 43123 / DSM 2839 / NBRC 102507 / CH34) (Ralstonia metallidurans).